A 370-amino-acid polypeptide reads, in one-letter code: Histidinol-phosphate aminotransferase (370 aa).

Lys220 is modified (N6-(pyridoxal phosphate)lysine).

This sequence belongs to the class-II pyridoxal-phosphate-dependent aminotransferase family. Histidinol-phosphate aminotransferase subfamily. As to quaternary structure, homodimer. Requires pyridoxal 5'-phosphate as cofactor.

The catalysed reaction is L-histidinol phosphate + 2-oxoglutarate = 3-(imidazol-4-yl)-2-oxopropyl phosphate + L-glutamate. It functions in the pathway amino-acid biosynthesis; L-histidine biosynthesis; L-histidine from 5-phospho-alpha-D-ribose 1-diphosphate: step 7/9. In Granulibacter bethesdensis (strain ATCC BAA-1260 / CGDNIH1), this protein is Histidinol-phosphate aminotransferase.